A 376-amino-acid polypeptide reads, in one-letter code: Carbamoyl phosphate synthase small chain (376 aa).

The interval 1–184 is CPSase; it reads MKAILALADG…SEGYQQQTGE (184 aa). L-glutamine is bound by residues Ser45, Gly236, and Gly238. Residues 188–374 enclose the Glutamine amidotransferase type-1 domain; that stretch reads KVVAYDFGIK…ADLMEKNRQS (187 aa). The Nucleophile role is filled by Cys263. L-glutamine-binding residues include Leu264, Gln267, Asn305, Gly307, and Phe308. Residues His347 and Glu349 contribute to the active site.

It belongs to the CarA family. In terms of assembly, composed of two chains; the small (or glutamine) chain promotes the hydrolysis of glutamine to ammonia, which is used by the large (or ammonia) chain to synthesize carbamoyl phosphate. Tetramer of heterodimers (alpha,beta)4.

It carries out the reaction hydrogencarbonate + L-glutamine + 2 ATP + H2O = carbamoyl phosphate + L-glutamate + 2 ADP + phosphate + 2 H(+). The enzyme catalyses L-glutamine + H2O = L-glutamate + NH4(+). It functions in the pathway amino-acid biosynthesis; L-arginine biosynthesis; carbamoyl phosphate from bicarbonate: step 1/1. Its pathway is pyrimidine metabolism; UMP biosynthesis via de novo pathway; (S)-dihydroorotate from bicarbonate: step 1/3. Small subunit of the glutamine-dependent carbamoyl phosphate synthetase (CPSase). CPSase catalyzes the formation of carbamoyl phosphate from the ammonia moiety of glutamine, carbonate, and phosphate donated by ATP, constituting the first step of 2 biosynthetic pathways, one leading to arginine and/or urea and the other to pyrimidine nucleotides. The small subunit (glutamine amidotransferase) binds and cleaves glutamine to supply the large subunit with the substrate ammonia. The sequence is that of Carbamoyl phosphate synthase small chain from Syntrophotalea carbinolica (strain DSM 2380 / NBRC 103641 / GraBd1) (Pelobacter carbinolicus).